A 598-amino-acid chain; its full sequence is Ceramide transfer protein (598 aa).

A compositionally biased stretch (polar residues) spans 1–11 (MSDNQSWNSSG). The tract at residues 1 to 24 (MSDNQSWNSSGSEEDPETESGPPV) is disordered. A PH domain is found at 23 to 117 (PVERCGVLSK…WIDAIEQHKT (95 aa)). Ser-126 is modified (phosphoserine). Ser-132 bears the Phosphoserine; by PKD mark. Ser-135 is subject to Phosphoserine. The disordered stretch occupies residues 202–221 (DDEDDFPTTRSDGDFLHNTN). The stretch at 268-301 (KREESWQKRHDKEMEKRRRLEEAYKNAMAELKKK) forms a coiled coil. Ser-315 carries the phosphoserine modification. Positions 321–327 (EFFDAVE) match the FFAT motif. An START domain is found at 363–592 (GTHRFVQKVE…FTSYVQEKTA (230 aa)). The an N-acylsphing-4-enine site is built by Glu-446, Gln-467, Asn-504, and Tyr-553.

As to quaternary structure, interacts with VAPA and VAPB. Interaction with VAPB is less efficient than with VAPA. Interacts (via FFAT motif) with the MOSPD2 (via MSP domain). Post-translationally, phosphorylation on Ser-132 decreases the affinity toward phosphatidylinositol 4-phosphate at Golgi membranes and reduces ceramide transfer activity. Inactivated by hyperphosphorylation of serine residues by CSNK1G2/CK1 that triggers dissociation from the Golgi complex, thus down-regulating ER-to-Golgi transport of ceramide and sphingomyelin synthesis.

Its subcellular location is the cytoplasm. It localises to the golgi apparatus. The protein localises to the endoplasmic reticulum. It catalyses the reaction N-hexadecanoylsphing-4-enine(in) = N-hexadecanoylsphing-4-enine(out). In terms of biological role, shelters ceramides and diacylglycerol lipids inside its START domain and mediates the intracellular trafficking of ceramides and diacylglycerol lipids in a non-vesicular manner. This Cricetulus griseus (Chinese hamster) protein is Ceramide transfer protein (CERT1).